The sequence spans 259 residues: Pro-opiomelanocortin (259 aa).

Residues 1 to 22 form the signal peptide; it reads MLRSVWVYSLGLAVLLQQSGRE. Glutamine 23 is subject to Pyrrolidone carboxylic acid. Intrachain disulfides connect cysteine 24–cysteine 46 and cysteine 30–cysteine 42. Residues 113-142 are disordered; the sequence is PQAEEEMEESESSQQQRREDKRSYSMEHFR. Residues 128 to 142 show a composition bias toward basic and acidic residues; sequence QRREDKRSYSMEHFR. Residue valine 147 is modified to Valine amide.

This sequence belongs to the POMC family. Specific enzymatic cleavages at paired basic residues yield the different active peptides.

Its subcellular location is the secreted. Functionally, stimulates the adrenal glands to release cortisol. In terms of biological role, anorexigenic peptide. Increases the pigmentation of skin by increasing melanin production in melanocytes. Increases the pigmentation of skin by increasing melanin production in melanocytes. Its function is as follows. Endogenous orexigenic opiate. Functionally, endogenous opiate. This Lepisosteus osseus (Long-nosed gar) protein is Pro-opiomelanocortin (pomc).